We begin with the raw amino-acid sequence, 189 residues long: Casparian strip membrane protein 1 (189 aa).

Residues Met-1–Gly-25 are Cytoplasmic-facing. A helical transmembrane segment spans residues Leu-26–Ile-46. Topologically, residues Thr-47–Ala-73 are extracellular. The N-linked (GlcNAc...) asparagine glycan is linked to Asn-52. Residues Phe-74 to Ile-94 traverse the membrane as a helical segment. Residues Ser-95–Arg-108 lie on the Cytoplasmic side of the membrane. The helical transmembrane segment at Val-109–Ala-129 threads the bilayer. Residues Val-130–Gln-158 are Extracellular-facing. Residues Ala-159–Leu-179 traverse the membrane as a helical segment. The Cytoplasmic portion of the chain corresponds to Ser-180–Pro-189.

It belongs to the Casparian strip membrane proteins (CASP) family. In terms of assembly, homodimer and heterodimers.

The protein resides in the cell membrane. Its function is as follows. Regulates membrane-cell wall junctions and localized cell wall deposition. Required for establishment of the Casparian strip membrane domain (CSD) and the subsequent formation of Casparian strips, a cell wall modification of the root endodermis that determines an apoplastic barrier between the intraorganismal apoplasm and the extraorganismal apoplasm and prevents lateral diffusion. In Picea glauca (White spruce), this protein is Casparian strip membrane protein 1.